Consider the following 587-residue polypeptide: 2-succinyl-5-enolpyruvyl-6-hydroxy-3-cyclohexene-1-carboxylate synthase (587 aa).

This sequence belongs to the TPP enzyme family. MenD subfamily. As to quaternary structure, homodimer. The cofactor is Mg(2+). Mn(2+) is required as a cofactor. Thiamine diphosphate serves as cofactor.

It carries out the reaction isochorismate + 2-oxoglutarate + H(+) = 5-enolpyruvoyl-6-hydroxy-2-succinyl-cyclohex-3-ene-1-carboxylate + CO2. It participates in quinol/quinone metabolism; 1,4-dihydroxy-2-naphthoate biosynthesis; 1,4-dihydroxy-2-naphthoate from chorismate: step 2/7. It functions in the pathway cofactor biosynthesis; phylloquinone biosynthesis. Functionally, catalyzes the thiamine diphosphate-dependent decarboxylation of 2-oxoglutarate and the subsequent addition of the resulting succinic semialdehyde-thiamine pyrophosphate anion to isochorismate to yield 2-succinyl-5-enolpyruvyl-6-hydroxy-3-cyclohexene-1-carboxylate (SEPHCHC). The sequence is that of 2-succinyl-5-enolpyruvyl-6-hydroxy-3-cyclohexene-1-carboxylate synthase from Prochlorococcus marinus (strain MIT 9215).